The primary structure comprises 651 residues: MPIQVLPPQLANQIAAGEVVERPASVVKELVENSLDAGATRIDIDIERGGAKLIRIRDNGSGIGKDELTLALARHATSKIATLDDLEAIVSMGFRGEALASISSVSRLTLTSRTAEQSEAWQAYAEGRDMAVTVKPAAHPVGTTLEVLDLFYNTPARRKFMRTEKTEFTHIDEVVRRIALARFDVAITLHHNGKLMRQYRAAPDKNQYERRLGSICGATFLQHALAVSWQHGDLTIHGWVADPVGAKQLPDMQYCYVNQRMMRDRLINHAIRQAYQDQLSDEQQPAYVLYLEIDPHQVDVNVHPAKQEVRFHQARLVHDFIYQAVMSVLQQASAPRLDMTEPETGKPVQWQQENRPAAGENHFAQPPRTTNSPSYSGKAPRTGQARESANSGYQPENPYQKKQDELYKALLQPTDNGASTPPSGIAAPSTVLHDSCPNRTATNTAASNNKQRALVESPLESQSTGFGRVLTVYPPCYALLEYHKGLAILSLPVAERYLKVVQLTPSEEGLRAQPLLIPQRLTLSKSELNVLSTHHTLLTRFGIDVFVESQRATLRAVPLPLRQQNLQNLISELIGYLADYQTVETQQVEPDALASWMATRLQSEQENWSHSQAIQLLADVERLCPQLAKTPPSELLYMMDIHDAIKALKHE.

Residues 336-398 form a disordered region; that stretch reads RLDMTEPETG…ANSGYQPENP (63 aa). Over residues 385-394 the composition is skewed to polar residues; sequence ARESANSGYQ.

The protein belongs to the DNA mismatch repair MutL/HexB family.

Functionally, this protein is involved in the repair of mismatches in DNA. It is required for dam-dependent methyl-directed DNA mismatch repair. May act as a 'molecular matchmaker', a protein that promotes the formation of a stable complex between two or more DNA-binding proteins in an ATP-dependent manner without itself being part of a final effector complex. In Pectobacterium atrosepticum (strain SCRI 1043 / ATCC BAA-672) (Erwinia carotovora subsp. atroseptica), this protein is DNA mismatch repair protein MutL.